Reading from the N-terminus, the 509-residue chain is Lysine--tRNA ligase (509 aa).

Polar residues predominate over residues 1-18 (MSEQNPTQAAKQAPQQEL). The segment at 1-20 (MSEQNPTQAAKQAPQQELND) is disordered. E418 and E425 together coordinate Mg(2+).

It belongs to the class-II aminoacyl-tRNA synthetase family. Homodimer. The cofactor is Mg(2+).

The protein resides in the cytoplasm. The enzyme catalyses tRNA(Lys) + L-lysine + ATP = L-lysyl-tRNA(Lys) + AMP + diphosphate. The protein is Lysine--tRNA ligase of Psychromonas ingrahamii (strain DSM 17664 / CCUG 51855 / 37).